Here is a 108-residue protein sequence, read N- to C-terminus: Trp operon repressor homolog (108 aa).

A DNA-binding region spans residues 59–82 (QRQISQLLGVGVATITRGSNELKS).

It belongs to the TrpR family. In terms of assembly, homodimer.

The protein resides in the cytoplasm. In terms of biological role, this protein is an aporepressor. When complexed with L-tryptophan it binds the operator region of the trp operon and prevents the initiation of transcription. The sequence is that of Trp operon repressor homolog from Aliivibrio fischeri (strain ATCC 700601 / ES114) (Vibrio fischeri).